Consider the following 258-residue polypeptide: Myogenic factor 5 (258 aa).

Residues 21–50 (LSSPEGEFPEDFEPRELPPFGAPAPTEPAC) form a disordered region. One can recognise a bHLH domain in the interval 85–136 (DRRKAATMRERRRLKKVNQAFETLKRCTTANPNQRLPKVEILRNAIRYIESL). The disordered stretch occupies residues 220-258 (AEEPGLPLRHAGSLSPGASIDSGPGTPGSPPPRRTYQAL).

In terms of assembly, efficient DNA binding requires dimerization with another bHLH protein.

The protein resides in the nucleus. Acts as a transcriptional activator that promotes transcription of muscle-specific target genes and plays a role in muscle differentiation. Induces fibroblasts to differentiate into myoblasts. Probable sequence specific DNA-binding protein. The protein is Myogenic factor 5 (MYF5) of Gallus gallus (Chicken).